A 1595-amino-acid polypeptide reads, in one-letter code: DNA-directed RNA polymerase subunit beta'' (1595 aa).

Residues Cys216, Cys286, Cys294, and Cys297 each contribute to the Zn(2+) site.

Belongs to the RNA polymerase beta' chain family. RpoC2 subfamily. In plastids the minimal PEP RNA polymerase catalytic core is composed of four subunits: alpha, beta, beta', and beta''. When a (nuclear-encoded) sigma factor is associated with the core the holoenzyme is formed, which can initiate transcription. The cofactor is Zn(2+).

It localises to the plastid. Its subcellular location is the chloroplast. It catalyses the reaction RNA(n) + a ribonucleoside 5'-triphosphate = RNA(n+1) + diphosphate. Its function is as follows. DNA-dependent RNA polymerase catalyzes the transcription of DNA into RNA using the four ribonucleoside triphosphates as substrates. The sequence is that of DNA-directed RNA polymerase subunit beta'' from Bigelowiella natans (Pedinomonas minutissima).